The primary structure comprises 146 residues: Negative cofactor 2 complex subunit beta (146 aa).

Residues Phe-124–Ser-146 are disordered. Phosphoserine occurs at positions 135, 137, and 142.

Component of the NC2 (negative cofactor 2) complex composed of BUR6 and NCB2. The NC2 complex associates with SPT15/TBP. Interacts with SPT15/TBP.

It localises to the nucleus. Component of the NC2 complex which represses RNA polymerase II transcription through binding to SPT15/TBP and thereby inhibiting the assembly of the preinitiation complex. The NC2 complex may also mediate transcriptional activation from TATA-driven promoters through association with SPT15/TBP. The polypeptide is Negative cofactor 2 complex subunit beta (NCB2) (Saccharomyces cerevisiae (strain ATCC 204508 / S288c) (Baker's yeast)).